The primary structure comprises 174 residues: RNA pyrophosphohydrolase (174 aa).

The Nudix hydrolase domain occupies 6–149; sequence GYRPNVGIIL…KRDVYERALS (144 aa). The short motif at 38–59 is the Nudix box element; it reads GGIKPGESPEAAMYRELLEEVG.

It belongs to the Nudix hydrolase family. RppH subfamily. A divalent metal cation serves as cofactor.

Functionally, accelerates the degradation of transcripts by removing pyrophosphate from the 5'-end of triphosphorylated RNA, leading to a more labile monophosphorylated state that can stimulate subsequent ribonuclease cleavage. In Chromobacterium violaceum (strain ATCC 12472 / DSM 30191 / JCM 1249 / CCUG 213 / NBRC 12614 / NCIMB 9131 / NCTC 9757 / MK), this protein is RNA pyrophosphohydrolase.